The sequence spans 1508 residues: Ras guanine nucleotide exchange factor Y (1508 aa).

Disordered regions lie at residues Met-1 to Glu-73, Lys-128 to Val-182, Ile-197 to Ser-272, Ile-396 to Asp-517, Leu-565 to Thr-593, Leu-606 to Ser-727, Asn-831 to Glu-1021, and Thr-1153 to Asn-1172. Low complexity-rich tracts occupy residues Asn-9–Ser-22 and Asn-33–Asn-72. Polar residues-rich tracts occupy residues Lys-128 to Ile-150 and Asp-172 to Val-182. Low complexity predominate over residues Asn-199–Thr-216. A compositionally biased stretch (basic and acidic residues) spans Asp-223–Asp-232. The span at Glu-233–Glu-250 shows a compositional bias: acidic residues. Residues Ile-255 to Ser-272 are compositionally biased toward low complexity. The segment covering Cys-399 to Asp-409 has biased composition (basic and acidic residues). Residues Asn-413–Ser-447 are compositionally biased toward low complexity. Residues Pro-465–Pro-475 show a composition bias toward pro residues. A compositionally biased stretch (polar residues) spans Phe-492–Lys-510. Low complexity-rich tracts occupy residues Asn-574–Thr-593, Leu-606–Ser-660, Asn-668–Asn-687, Asn-831–Lys-855, Asn-862–Pro-891, Ser-942–Thr-984, Ile-993–Asn-1019, and Ser-1160–Asn-1172. Residues Glu-659–Asn-686 adopt a coiled-coil conformation. The N-terminal Ras-GEF domain occupies Asn-1074 to Ala-1234. The 231-residue stretch at Asp-1278–Pro-1508 folds into the Ras-GEF domain.

In terms of biological role, promotes the exchange of Ras-bound GDP by GTP. The sequence is that of Ras guanine nucleotide exchange factor Y (gefY) from Dictyostelium discoideum (Social amoeba).